Consider the following 944-residue polypeptide: Nonsense-mediated mRNA decay factor SMG8 (944 aa).

Disordered regions lie at residues 559 to 601 (LNNG…SNCC) and 629 to 654 (ASSEQLLNSEQNTTSSGTSSADTDNE). The span at 568 to 589 (QDEDAEEDEAEEEEGQEQEQPT) shows a compositional bias: acidic residues. Positions 629 to 640 (ASSEQLLNSEQN) are enriched in polar residues. Residues 641–650 (TTSSGTSSAD) show a composition bias toward low complexity.

Belongs to the SMG8 family.

Its function is as follows. Involved in nonsense-mediated decay (NMD) of mRNAs containing premature stop codons. Probable component of kinase complex containing nonC and recruited to stalled ribosomes. In Drosophila melanogaster (Fruit fly), this protein is Nonsense-mediated mRNA decay factor SMG8.